Reading from the N-terminus, the 417-residue chain is Serine hydroxymethyltransferase (417 aa).

(6S)-5,6,7,8-tetrahydrofolate contacts are provided by residues leucine 120 and 124 to 126 (GHL). Position 229 is an N6-(pyridoxal phosphate)lysine (lysine 229).

It belongs to the SHMT family. In terms of assembly, homodimer. Requires pyridoxal 5'-phosphate as cofactor.

The protein localises to the cytoplasm. The catalysed reaction is (6R)-5,10-methylene-5,6,7,8-tetrahydrofolate + glycine + H2O = (6S)-5,6,7,8-tetrahydrofolate + L-serine. It participates in one-carbon metabolism; tetrahydrofolate interconversion. The protein operates within amino-acid biosynthesis; glycine biosynthesis; glycine from L-serine: step 1/1. Catalyzes the reversible interconversion of serine and glycine with tetrahydrofolate (THF) serving as the one-carbon carrier. This reaction serves as the major source of one-carbon groups required for the biosynthesis of purines, thymidylate, methionine, and other important biomolecules. Also exhibits THF-independent aldolase activity toward beta-hydroxyamino acids, producing glycine and aldehydes, via a retro-aldol mechanism. The polypeptide is Serine hydroxymethyltransferase (Anaeromyxobacter sp. (strain K)).